The following is a 113-amino-acid chain: Small ribosomal subunit protein eS24 (113 aa).

The protein belongs to the eukaryotic ribosomal protein eS24 family.

This is Small ribosomal subunit protein eS24 from Metallosphaera sedula (strain ATCC 51363 / DSM 5348 / JCM 9185 / NBRC 15509 / TH2).